A 604-amino-acid chain; its full sequence is Elongation factor 4 (604 aa).

The tr-type G domain occupies 10–191 (KNIRNFSIIA…KIITTIPAPS (182 aa)). Residues 22-27 (DHGKST) and 138-141 (NKID) contribute to the GTP site.

The protein belongs to the TRAFAC class translation factor GTPase superfamily. Classic translation factor GTPase family. LepA subfamily.

Its subcellular location is the cell inner membrane. It carries out the reaction GTP + H2O = GDP + phosphate + H(+). In terms of biological role, required for accurate and efficient protein synthesis under certain stress conditions. May act as a fidelity factor of the translation reaction, by catalyzing a one-codon backward translocation of tRNAs on improperly translocated ribosomes. Back-translocation proceeds from a post-translocation (POST) complex to a pre-translocation (PRE) complex, thus giving elongation factor G a second chance to translocate the tRNAs correctly. Binds to ribosomes in a GTP-dependent manner. In Helicobacter acinonychis (strain Sheeba), this protein is Elongation factor 4.